A 968-amino-acid polypeptide reads, in one-letter code: Leucine--tRNA ligase (968 aa).

Positions 1 to 13 are enriched in polar residues; that stretch reads MTETPTGTQSSRE. A disordered region spans residues 1 to 22; sequence MTETPTGTQSSRETAADDTPRH. The 'HIGH' region signature appears at 75–86; the sequence is PYPSGEGLHVGH. Residues 741-745 carry the 'KMSKS' region motif; that stretch reads KIGKS. Lys744 is an ATP binding site.

It belongs to the class-I aminoacyl-tRNA synthetase family.

Its subcellular location is the cytoplasm. The enzyme catalyses tRNA(Leu) + L-leucine + ATP = L-leucyl-tRNA(Leu) + AMP + diphosphate. This Mycolicibacterium vanbaalenii (strain DSM 7251 / JCM 13017 / BCRC 16820 / KCTC 9966 / NRRL B-24157 / PYR-1) (Mycobacterium vanbaalenii) protein is Leucine--tRNA ligase.